We begin with the raw amino-acid sequence, 230 residues long: Rab15 effector protein (230 aa).

Glycine 2 carries N-myristoyl glycine lipidation.

As to quaternary structure, interacts with the GTP-bound form of RAB15, RAB3A-D and RAB34.

It is found in the early endosome membrane. Effector that interacts with Rab GTPases in their active form (GTP-bound) including RAB15, RAB3A-D and RAB34. Controls downstream signaling such as cell proliferation and cell migration. Also regulates transferrin receptor recycling from the endocytic recycling compartment. The polypeptide is Rab15 effector protein (Mus musculus (Mouse)).